A 512-amino-acid polypeptide reads, in one-letter code: Podocan-like protein 1 (512 aa).

A signal peptide spans 1 to 26 (MAESGLAMWPSLLLLLLLPGPPPVAG). In terms of domain architecture, LRRNT spans 37 to 74 (ESLQPLPRACPLRCSCPRVDTVDCDGLDLRVFPDNITR). N-linked (GlcNAc...) asparagine glycosylation is present at Asn71. LRR repeat units lie at residues 75-96 (AAQH…ELSR), 99-119 (GLRT…PDEA), 125-146 (QLQH…LPRS), 147-167 (LRVA…TFGE), 170-193 (ALRS…AFRG), 196-216 (AIAT…SLPP), 217-238 (SLER…ALSR), 241-261 (QLRE…DATT), 267-288 (SLEY…LPRT), 289-309 (LAIL…RLHG), 312-332 (GLRY…PAGA), 338-359 (GLHT…LPRR), 360-380 (LRAL…DLVA), 383-396 (GLTE…RLAS), 409-430 (ALRS…LPTG), 431-451 (LRTL…PLAG), and 454-474 (QLRE…GPGT).

The protein belongs to the small leucine-rich proteoglycan (SLRP) family. SLRP class V subfamily. Post-translationally, N-glycosylated.

It localises to the secreted. The protein resides in the extracellular space. The protein localises to the extracellular matrix. This Homo sapiens (Human) protein is Podocan-like protein 1 (PODNL1).